A 716-amino-acid polypeptide reads, in one-letter code: DNA ligase (716 aa).

Residues 49–53 (DAEYD), 98–99 (SL), and E131 each bind NAD(+). The active-site N6-AMP-lysine intermediate is K133. The NAD(+) site is built by R154, E191, K308, and K332. Residues C437, C439, C461, and C467 each coordinate Zn(2+). The BRCT domain occupies 638-716 (KRHSPIATKT…EDEWLQLIAE (79 aa)).

Belongs to the NAD-dependent DNA ligase family. LigA subfamily. Mg(2+) is required as a cofactor. Mn(2+) serves as cofactor.

It catalyses the reaction NAD(+) + (deoxyribonucleotide)n-3'-hydroxyl + 5'-phospho-(deoxyribonucleotide)m = (deoxyribonucleotide)n+m + AMP + beta-nicotinamide D-nucleotide.. In terms of biological role, DNA ligase that catalyzes the formation of phosphodiester linkages between 5'-phosphoryl and 3'-hydroxyl groups in double-stranded DNA using NAD as a coenzyme and as the energy source for the reaction. It is essential for DNA replication and repair of damaged DNA. In Bradyrhizobium sp. (strain BTAi1 / ATCC BAA-1182), this protein is DNA ligase.